The chain runs to 1111 residues: Nuclear migration and anchoring protein unc-84 (1111 aa).

Topologically, residues 1–509 (MAPATEADNN…LTDKKSSKFS (509 aa)) are nuclear. Required for nuclear envelope localization regions lie at residues 118-244 (YILR…SQTL) and 503-507 (KKSSK). Residues 232-253 (ERASRMTTRSQTLERSRKFDGL) form a disordered region. Residues 243–252 (TLERSRKFDG) show a composition bias toward basic and acidic residues. The helical transmembrane segment at 510-530 (WCQILGLLLALLFAIFLLGFL) threads the bilayer. Residues 531-1111 (TSDNTAIRVK…LRVHGKVVQV (581 aa)) are Perinuclear space-facing. Positions 912–1111 (QYDKNHLEAI…LRVHGKVVQV (200 aa)) are interaction with zyg-12. Positions 945 to 1109 (GGAVVSTRCS…YRLRVHGKVV (165 aa)) constitute an SUN domain.

As to quaternary structure, component of the unc-83-unc-84 LINC complex which contains at least unc-83 and unc-84. Within the unc-83-unc-84 LINC complex interacts (via C-terminus) with unc-83; the interaction is probably required to recruit unc-83 to the nuclear membrane. Most likely interacts with anc-1; the interaction is probably required to recruit anc-1 to the nuclear envelope. Interacts (via C-terminus) with zyg-12 (via C-terminus); the interaction is direct. May interact with lmn-1; this interaction may be required to complete the connection between the nuclear lamina and the cytoskeleton. Expressed in all somatic cells. Not expressed in germ cells in the mitotic and transition zones of the gonad. One study shows expression at the beginning of the late pachytene stage in the proximal gonad, but there is no expression in the male germline, suggesting expression is specific to oogenesis in hermaphrodites.

It localises to the nucleus inner membrane. It is found in the cytoplasm. The protein resides in the cytoskeleton. In terms of biological role, involved in nuclear migration and anchoring in hypodermal precursor cells. Most likely recruits anc-1 to the nuclear envelope where anc-1 functions to tether the nucleus to the actin cytoskeleton. Component of the unc-83-unc-84 LINC (LInker of Nucleoskeleton and Cytoskeleton) complex where it recruits and interacts with unc-83 to form a bridge connecting the nuclear envelope to the cytoskeleton which allows for nuclear transport along microtubules. Its role in nuclear migration may be in association with lamin, lmn-1. Regulates nuclear migrations in one-cell embryos, controlling the posterior migration of the male pronucleus following fertilization. Not required for centrosome attachment to the nucleus. Plays a role in the maintenance of the nuclear envelope architecture in body wall muscle cells. May be involved in DNA damage repair through an association with zyg-12. Potentially has roles in homologous recombination, double strand break repair and meiotic recombination. Specifically, may in part inhibit non-homologous end joining repair, most likely through recruiting fan-1 to the nucleoplasm, to facilitate the repair of DNA cross-links. In Caenorhabditis elegans, this protein is Nuclear migration and anchoring protein unc-84.